Here is a 304-residue protein sequence, read N- to C-terminus: UDP-3-O-acyl-N-acetylglucosamine deacetylase (304 aa).

Positions 78, 237, and 241 each coordinate Zn(2+). Histidine 264 functions as the Proton donor in the catalytic mechanism.

The protein belongs to the LpxC family. The cofactor is Zn(2+).

The enzyme catalyses a UDP-3-O-[(3R)-3-hydroxyacyl]-N-acetyl-alpha-D-glucosamine + H2O = a UDP-3-O-[(3R)-3-hydroxyacyl]-alpha-D-glucosamine + acetate. It functions in the pathway glycolipid biosynthesis; lipid IV(A) biosynthesis; lipid IV(A) from (3R)-3-hydroxytetradecanoyl-[acyl-carrier-protein] and UDP-N-acetyl-alpha-D-glucosamine: step 2/6. Its function is as follows. Catalyzes the hydrolysis of UDP-3-O-myristoyl-N-acetylglucosamine to form UDP-3-O-myristoylglucosamine and acetate, the committed step in lipid A biosynthesis. The polypeptide is UDP-3-O-acyl-N-acetylglucosamine deacetylase (Legionella pneumophila (strain Lens)).